We begin with the raw amino-acid sequence, 457 residues long: Cysteine--tRNA ligase (457 aa).

Cysteine 31 contributes to the Zn(2+) binding site. The short motif at 33–43 (PTVYNYAHIGN) is the 'HIGH' region element. The Zn(2+) site is built by cysteine 211, histidine 236, and glutamate 240. The 'KMSKS' region signature appears at 269–273 (KMSKS). Lysine 272 is an ATP binding site.

This sequence belongs to the class-I aminoacyl-tRNA synthetase family. As to quaternary structure, monomer. Zn(2+) serves as cofactor.

The protein resides in the cytoplasm. It catalyses the reaction tRNA(Cys) + L-cysteine + ATP = L-cysteinyl-tRNA(Cys) + AMP + diphosphate. This is Cysteine--tRNA ligase from Xanthomonas campestris pv. campestris (strain ATCC 33913 / DSM 3586 / NCPPB 528 / LMG 568 / P 25).